A 328-amino-acid polypeptide reads, in one-letter code: Glycerol-3-phosphate dehydrogenase [NAD(P)+] (328 aa).

NADPH-binding residues include tryptophan 11, arginine 30, and lysine 103. Sn-glycerol 3-phosphate contacts are provided by lysine 103, glycine 132, and serine 134. Alanine 136 contributes to the NADPH binding site. Residues lysine 187, aspartate 240, serine 250, arginine 251, and asparagine 252 each coordinate sn-glycerol 3-phosphate. The active-site Proton acceptor is lysine 187. Residue arginine 251 coordinates NADPH. Valine 275 and glutamate 277 together coordinate NADPH.

Belongs to the NAD-dependent glycerol-3-phosphate dehydrogenase family.

The protein localises to the cytoplasm. It carries out the reaction sn-glycerol 3-phosphate + NAD(+) = dihydroxyacetone phosphate + NADH + H(+). The catalysed reaction is sn-glycerol 3-phosphate + NADP(+) = dihydroxyacetone phosphate + NADPH + H(+). Its pathway is membrane lipid metabolism; glycerophospholipid metabolism. Functionally, catalyzes the reduction of the glycolytic intermediate dihydroxyacetone phosphate (DHAP) to sn-glycerol 3-phosphate (G3P), the key precursor for phospholipid synthesis. The chain is Glycerol-3-phosphate dehydrogenase [NAD(P)+] from Aromatoleum aromaticum (strain DSM 19018 / LMG 30748 / EbN1) (Azoarcus sp. (strain EbN1)).